Consider the following 136-residue polypeptide: Large ribosomal subunit protein uL16 (136 aa).

Belongs to the universal ribosomal protein uL16 family. Part of the 50S ribosomal subunit.

Functionally, binds 23S rRNA and is also seen to make contacts with the A and possibly P site tRNAs. The chain is Large ribosomal subunit protein uL16 from Rickettsia peacockii (strain Rustic).